A 287-amino-acid polypeptide reads, in one-letter code: MEGIFYALIPMFTWGSIGFVSNKIGGKPSQQTLGMTFGALLFSLAVWLIVRPEMTLQLWLFGILGGFIWSIGQTGQFHAMQYMGVSVANPLSSGSQLVLGSLIGVLVFHEWTRPMQFVVGSLALLLLIIGFYFSSKQDDANAQVNHLHNFSKGFRALTYSTIGYVMYAVLFNNIMKFEVLSVILPMAVGMVLGAITFMSFKISIDQYVIKNSVVGLLWGIGNIFMLLAASKAGLAIAFSFSQLGAIISIVGGILFLGETKTKKEMRWVVTGIICFIVGAILLGVVKS.

The next 10 helical transmembrane spans lie at 4 to 26 (IFYALIPMFTWGSIGFVSNKIGG), 33 to 50 (LGMTFGALLFSLAVWLIV), 55 to 72 (TLQLWLFGILGGFIWSIG), 85 to 107 (VSVANPLSSGSQLVLGSLIGVLV), 117 to 134 (FVVGSLALLLLIIGFYFS), 154 to 171 (FRALTYSTIGYVMYAVLF), 181 to 200 (SVILPMAVGMVLGAITFMSF), 207 to 229 (YVIKNSVVGLLWGIGNIFMLLAA), 234 to 256 (LAIAFSFSQLGAIISIVGGILFL), and 268 to 285 (VVTGIICFIVGAILLGVV).

Belongs to the GRP transporter (TC 2.A.7.5) family.

It localises to the cell membrane. The protein is Putative sugar uptake protein M6_Spy1874 of Streptococcus pyogenes serotype M6 (strain ATCC BAA-946 / MGAS10394).